We begin with the raw amino-acid sequence, 369 residues long: Chorismate synthase (369 aa).

NADP(+)-binding residues include Arg-48 and Arg-54. Residues 125–127 (RSS), 238–239 (NA), Gly-278, 293–297 (KPTSS), and Arg-319 contribute to the FMN site.

Belongs to the chorismate synthase family. Homotetramer. It depends on FMNH2 as a cofactor.

The enzyme catalyses 5-O-(1-carboxyvinyl)-3-phosphoshikimate = chorismate + phosphate. It participates in metabolic intermediate biosynthesis; chorismate biosynthesis; chorismate from D-erythrose 4-phosphate and phosphoenolpyruvate: step 7/7. Catalyzes the anti-1,4-elimination of the C-3 phosphate and the C-6 proR hydrogen from 5-enolpyruvylshikimate-3-phosphate (EPSP) to yield chorismate, which is the branch point compound that serves as the starting substrate for the three terminal pathways of aromatic amino acid biosynthesis. This reaction introduces a second double bond into the aromatic ring system. The sequence is that of Chorismate synthase from Burkholderia thailandensis (strain ATCC 700388 / DSM 13276 / CCUG 48851 / CIP 106301 / E264).